Reading from the N-terminus, the 134-residue chain is Small ribosomal subunit protein uS11 (134 aa).

Belongs to the universal ribosomal protein uS11 family. Part of the 30S ribosomal subunit. Interacts with proteins S7 and S18. Binds to IF-3.

Functionally, located on the platform of the 30S subunit, it bridges several disparate RNA helices of the 16S rRNA. Forms part of the Shine-Dalgarno cleft in the 70S ribosome. In Corynebacterium glutamicum (strain R), this protein is Small ribosomal subunit protein uS11.